A 461-amino-acid chain; its full sequence is Vitamin K-dependent protein C (461 aa).

The signal sequence occupies residues 1-18 (MWQFRIFLLFASTWGISG). The propeptide occupies 19–41 (VSAHPDPVFSSSEGAHQVLRVRR). Residues 42–87 (ANSFLEEVRAGSLERECMEEICDFEEAQEIFQNVEDTLAFWIKYFD) form the Gla domain. 10 positions are modified to 4-carboxyglutamate: Glu47, Glu48, Glu55, Glu57, Glu60, Glu61, Glu66, Glu67, Glu70, and Glu76. The cysteines at positions 58 and 63 are disulfide-linked. 9 cysteine pairs are disulfide-bonded: Cys91–Cys110, Cys100–Cys105, Cys104–Cys119, Cys121–Cys130, Cys139–Cys150, Cys146–Cys159, Cys161–Cys174, Cys182–Cys320, and Cys239–Cys255. 2 EGF-like domains span residues 96-131 (LDHQ…RFCQ) and 135-175 (GFQD…MHCR). (3R)-3-hydroxyaspartate is present on Asp112. The Peptidase S1 domain occupies 213–450 (IVNGTLTKQG…YLKWIHSYIG (238 aa)). A glycan (N-linked (GlcNAc...) asparagine) is linked at Asn215. His254 acts as the Charge relay system in catalysis. Asn291 is a glycosylation site (N-linked (GlcNAc...) asparagine). Residue Asp300 is the Charge relay system of the active site. The N-linked (GlcNAc...) asparagine glycan is linked to Asn355. 2 cysteine pairs are disulfide-bonded: Cys373-Cys387 and Cys398-Cys426. Ser402 serves as the catalytic Charge relay system.

Belongs to the peptidase S1 family. As to quaternary structure, synthesized as a single chain precursor, which is cleaved into a light chain and a heavy chain held together by a disulfide bond. The enzyme is then activated by thrombin, which cleaves a tetradecapeptide from the amino end of the heavy chain; this reaction, which occurs at the surface of endothelial cells, is strongly promoted by thrombomodulin. Post-translationally, the vitamin K-dependent, enzymatic carboxylation of some Glu residues allows the modified protein to bind calcium. In terms of processing, the iron and 2-oxoglutarate dependent 3-hydroxylation of aspartate and asparagine is (R) stereospecific within EGF domains. As to expression, plasma; synthesized in the liver.

Its subcellular location is the secreted. It is found in the golgi apparatus. The protein localises to the endoplasmic reticulum. The catalysed reaction is Degradation of blood coagulation factors Va and VIIIa.. Functionally, protein C is a vitamin K-dependent serine protease that regulates blood coagulation by inactivating factors Va and VIIIa in the presence of calcium ions and phospholipids. Exerts a protective effect on the endothelial cell barrier function. The chain is Vitamin K-dependent protein C (Proc) from Rattus norvegicus (Rat).